The chain runs to 426 residues: Serine--tRNA ligase (426 aa).

Residue 233–235 participates in L-serine binding; that stretch reads TAE. 264-266 contributes to the ATP binding site; the sequence is RSE. L-serine is bound at residue Glu-287. Position 351–354 (351–354) interacts with ATP; that stretch reads EISS. Residue Ser-387 coordinates L-serine.

The protein belongs to the class-II aminoacyl-tRNA synthetase family. Type-1 seryl-tRNA synthetase subfamily. Homodimer. The tRNA molecule binds across the dimer.

It localises to the cytoplasm. The catalysed reaction is tRNA(Ser) + L-serine + ATP = L-seryl-tRNA(Ser) + AMP + diphosphate + H(+). It catalyses the reaction tRNA(Sec) + L-serine + ATP = L-seryl-tRNA(Sec) + AMP + diphosphate + H(+). It functions in the pathway aminoacyl-tRNA biosynthesis; selenocysteinyl-tRNA(Sec) biosynthesis; L-seryl-tRNA(Sec) from L-serine and tRNA(Sec): step 1/1. In terms of biological role, catalyzes the attachment of serine to tRNA(Ser). Is also able to aminoacylate tRNA(Sec) with serine, to form the misacylated tRNA L-seryl-tRNA(Sec), which will be further converted into selenocysteinyl-tRNA(Sec). The protein is Serine--tRNA ligase of Clostridium botulinum (strain 657 / Type Ba4).